The sequence spans 1043 residues: Desmoglein-1 (1043 aa).

An N-terminal signal peptide occupies residues methionine 1–serine 23. A propeptide spanning residues aspartate 24–arginine 49 is cleaved from the precursor. Cadherin domains lie at glutamate 50 to serine 158, methionine 159 to glutamate 270, leucine 271 to phenylalanine 385, and arginine 386 to serine 498. The Extracellular segment spans residues glutamate 50–proline 551. N-linked (GlcNAc...) asparagine glycosylation is found at asparagine 110 and asparagine 180. Residue asparagine 496 is glycosylated (N-linked (GlcNAc...) asparagine). A helical membrane pass occupies residues alanine 552–methionine 572. The Cytoplasmic portion of the chain corresponds to cysteine 573–lysine 1043. The tract at residues aspartate 770–proline 807 is disordered. Desmoglein repeat repeat units follow at residues threonine 819–glutamate 845, serine 846–valine 875, glycine 876–isoleucine 905, alanine 906–isoleucine 933, and glutamine 934–valine 962.

In terms of assembly, binds to JUP/plakoglobin. Interacts with PKP2. Interacts with DSC3; there is evidence to suggest that the interaction promotes cell-cell adhesion of keratinocytes. Expressed in the epidermis. Expressed in the muzzle epithelium.

It is found in the cell membrane. Its subcellular location is the cell junction. The protein localises to the desmosome. It localises to the cytoplasm. The protein resides in the nucleus. In terms of biological role, component of intercellular desmosome junctions. Involved in the interaction of plaque proteins and intermediate filaments mediating cell-cell adhesion. The protein is Desmoglein-1 (DSG1) of Bos taurus (Bovine).